The sequence spans 443 residues: MAKQPGLDFQSAKGGLGELKRRLLFVIGALIVFRIGSFIPIPGIDAAVLAKLLEQQRGTIIEMFNMFSGGALSRASIFALGIMPYISASIIIQLLTVVHPTLAEIKKEGESGRRKISQYTRYGTLVLAIFQSIGIATGLPNMPGMQGLVINPGFAFYFTAVVSLVTGTMFLMWLGEQITERGIGNGISIIIFAGIVAGLPPAIAHTIEQARQGDLHFLVLLLVAVLVFAVTFFVVFVERGQRRIVVNYAKRQQGRRVYAAQSTHLPLKVNMAGVIPAIFASSIILFPATIASWFGGGTGWNWLTTISLYLQPGQPLYVLLYASAIIFFCFFYTALVFNPRETADNLKKSGAFVPGIRPGEQTAKYIDKVMTRLTLVGALYITFICLIPEFMRDAMKVPFYFGGTSLLIVVVVIMDFMAQVQTLMMSSQYESALKKANLKGYGR.

The next 10 helical transmembrane spans lie at 24–44 (LFVIGALIVFRIGSFIPIPGI), 77–97 (IFALGIMPYISASIIIQLLTV), 125–145 (LVLAIFQSIGIATGLPNMPGM), 154–174 (FAFYFTAVVSLVTGTMFLMWL), 183–203 (IGNGISIIIFAGIVAGLPPAI), 217–237 (FLVLLLVAVLVFAVTFFVVFV), 274–294 (VIPAIFASSIILFPATIASWF), 317–337 (YVLLYASAIIFFCFFYTALVF), 370–390 (MTRLTLVGALYITFICLIPEF), and 397–417 (VPFYFGGTSLLIVVVVIMDFM).

The protein belongs to the SecY/SEC61-alpha family. In terms of assembly, component of the Sec protein translocase complex. Heterotrimer consisting of SecY, SecE and SecG subunits. The heterotrimers can form oligomers, although 1 heterotrimer is thought to be able to translocate proteins. Interacts with the ribosome. Interacts with SecDF, and other proteins may be involved. Interacts with SecA.

It localises to the cell inner membrane. Functionally, the central subunit of the protein translocation channel SecYEG. Consists of two halves formed by TMs 1-5 and 6-10. These two domains form a lateral gate at the front which open onto the bilayer between TMs 2 and 7, and are clamped together by SecE at the back. The channel is closed by both a pore ring composed of hydrophobic SecY resides and a short helix (helix 2A) on the extracellular side of the membrane which forms a plug. The plug probably moves laterally to allow the channel to open. The ring and the pore may move independently. The chain is Protein translocase subunit SecY from Escherichia coli O157:H7.